Reading from the N-terminus, the 72-residue chain is High-potential iron-sulfur protein isozyme 1 (72 aa).

[4Fe-4S] cluster-binding residues include Cys-34, Cys-37, Cys-51, and Cys-65.

The protein belongs to the high-potential iron-sulfur protein (HiPIP) family. In terms of assembly, homodimer.

Functionally, specific class of high-redox-potential 4Fe-4S ferredoxins. Functions in anaerobic electron transport in most purple and in some other photosynthetic bacteria and in at least one genus (Paracoccus) of halophilic, denitrifying bacteria. The chain is High-potential iron-sulfur protein isozyme 1 (hip1) from Ectothiorhodospira shaposhnikovii (Ectothiorhodospira vacuolata).